A 541-amino-acid chain; its full sequence is T-complex protein 1 subunit epsilon (541 aa).

Ala2 carries the post-translational modification N-acetylalanine. A Glycyl lysine isopeptide (Lys-Gly) (interchain with G-Cter in SUMO2) cross-link involves residue Lys20. Ser26 is modified (phosphoserine). Position 53 (Gly53) interacts with ADP. Gly53 is an ATP binding site. Asp104 is a binding site for Mg(2+). ADP is bound by residues Gly105, Thr106, Thr107, and Ser175. 2 residues coordinate ATP: Thr106 and Thr107. Residues Lys210, Lys214, Lys265, Lys275, and Lys279 each participate in a glycyl lysine isopeptide (Lys-Gly) (interchain with G-Cter in SUMO2) cross-link. Ser346 is subject to Phosphoserine. Lys392 is covalently cross-linked (Glycyl lysine isopeptide (Lys-Gly) (interchain with G-Cter in SUMO2)). The ADP site is built by Gly422, Asp492, Glu508, and Lys513. Gly422 is a binding site for ATP. Phosphoserine is present on Ser539.

Belongs to the TCP-1 chaperonin family. As to quaternary structure, component of the chaperonin-containing T-complex (TRiC), a hexadecamer composed of two identical back-to-back stacked rings enclosing a protein folding chamber. Each ring is made up of eight different subunits: TCP1/CCT1, CCT2, CCT3, CCT4, CCT5, CCT6A/CCT6, CCT7, CCT8. Interacts with PACRG. Interacts with DNAAF4. Interacts with DLEC1. Interacts with SPMAP2. In terms of processing, ubiquitinated by the DCX(DCAF12) complex specifically recognizes the diglutamate (Glu-Glu) at the C-terminus, leading to its degradation.

It localises to the cytoplasm. The protein localises to the cytoskeleton. Its subcellular location is the microtubule organizing center. It is found in the centrosome. The enzyme catalyses ATP + H2O = ADP + phosphate + H(+). Component of the chaperonin-containing T-complex (TRiC), a molecular chaperone complex that assists the folding of actin, tubulin and other proteins upon ATP hydrolysis. The TRiC complex mediates the folding of WRAP53/TCAB1, thereby regulating telomere maintenance. As part of the TRiC complex may play a role in the assembly of BBSome, a complex involved in ciliogenesis regulating transports vesicles to the cilia. The chain is T-complex protein 1 subunit epsilon (CCT5) from Pongo abelii (Sumatran orangutan).